Here is a 693-residue protein sequence, read N- to C-terminus: Polyribonucleotide nucleotidyltransferase (693 aa).

Mg(2+)-binding residues include Asp490 and Asp496. The KH domain occupies 557-617; it reads PRISWFFIDP…EKVQEAVEYI (61 aa). Residues 627–691 enclose the S1 motif domain; it reads GDLYTGKVTR…DAGRLQFRRL (65 aa).

This sequence belongs to the polyribonucleotide nucleotidyltransferase family. Requires Mg(2+) as cofactor.

The protein resides in the cytoplasm. The enzyme catalyses RNA(n+1) + phosphate = RNA(n) + a ribonucleoside 5'-diphosphate. Its function is as follows. Involved in mRNA degradation. Catalyzes the phosphorolysis of single-stranded polyribonucleotides processively in the 3'- to 5'-direction. The sequence is that of Polyribonucleotide nucleotidyltransferase from Fervidobacterium nodosum (strain ATCC 35602 / DSM 5306 / Rt17-B1).